A 210-amino-acid chain; its full sequence is Outer-membrane lipoprotein carrier protein (210 aa).

Positions 1 to 22 (MRAFKWALAIGATLALPLTAQA) are cleaved as a signal peptide.

Belongs to the LolA family. In terms of assembly, monomer.

It is found in the periplasm. Participates in the translocation of lipoproteins from the inner membrane to the outer membrane. Only forms a complex with a lipoprotein if the residue after the N-terminal Cys is not an aspartate (The Asp acts as a targeting signal to indicate that the lipoprotein should stay in the inner membrane). This Chromohalobacter salexigens (strain ATCC BAA-138 / DSM 3043 / CIP 106854 / NCIMB 13768 / 1H11) protein is Outer-membrane lipoprotein carrier protein.